Consider the following 397-residue polypeptide: S-adenosylmethionine synthase (397 aa).

ATP is bound at residue H17. Residue D19 participates in Mg(2+) binding. K(+) is bound at residue E45. Residues E58 and Q101 each coordinate L-methionine. The tract at residues 101 to 111 (QSPDIAQGVDK) is flexible loop. ATP-binding positions include 176 to 178 (DGK), 243 to 244 (RF), D252, 258 to 259 (RK), and K279. L-methionine is bound at residue D252. Residue K283 participates in L-methionine binding.

It belongs to the AdoMet synthase family. As to quaternary structure, homotetramer; dimer of dimers. Requires Mg(2+) as cofactor. The cofactor is K(+).

The protein localises to the cytoplasm. The enzyme catalyses L-methionine + ATP + H2O = S-adenosyl-L-methionine + phosphate + diphosphate. It participates in amino-acid biosynthesis; S-adenosyl-L-methionine biosynthesis; S-adenosyl-L-methionine from L-methionine: step 1/1. Functionally, catalyzes the formation of S-adenosylmethionine (AdoMet) from methionine and ATP. The overall synthetic reaction is composed of two sequential steps, AdoMet formation and the subsequent tripolyphosphate hydrolysis which occurs prior to release of AdoMet from the enzyme. In Staphylococcus aureus (strain USA300), this protein is S-adenosylmethionine synthase.